We begin with the raw amino-acid sequence, 452 residues long: Cobyrinate a,c-diamide synthase (452 aa).

The region spanning 248–441 is the GATase cobBQ-type domain; that stretch reads RVAYALDAAF…LHIHFYQNLL (194 aa). The active-site Nucleophile is Cys330.

It belongs to the CobB/CbiA family. It depends on Mg(2+) as a cofactor.

It carries out the reaction cob(II)yrinate + 2 L-glutamine + 2 ATP + 2 H2O = cob(II)yrinate a,c diamide + 2 L-glutamate + 2 ADP + 2 phosphate + 2 H(+). It functions in the pathway cofactor biosynthesis; adenosylcobalamin biosynthesis; cob(II)yrinate a,c-diamide from sirohydrochlorin (anaerobic route): step 10/10. Functionally, catalyzes the ATP-dependent amidation of the two carboxylate groups at positions a and c of cobyrinate, using either L-glutamine or ammonia as the nitrogen source. This chain is Cobyrinate a,c-diamide synthase, found in Listeria monocytogenes serotype 4b (strain F2365).